We begin with the raw amino-acid sequence, 133 residues long: Brain natriuretic peptide (133 aa).

The signal sequence occupies residues Met1–Ser22. Over residues Ser44 to Gln53 the composition is skewed to acidic residues. 2 disordered regions span residues Ser44–Gln76 and Thr93–Arg112. Cys108 and Cys124 form a disulfide bridge.

The protein belongs to the natriuretic peptide family.

It is found in the secreted. In terms of biological role, cardiac hormone which may function as a paracrine antifibrotic factor in the heart. Also plays a key role in cardiovascular homeostasis through natriuresis, diuresis, vasorelaxation, and inhibition of renin and aldosterone secretion. Has a cGMP-stimulating activity. The chain is Brain natriuretic peptide (nppb) from Takifugu rubripes (Japanese pufferfish).